Here is a 424-residue protein sequence, read N- to C-terminus: Glutamyl-tRNA reductase (424 aa).

Residues 49–52 (TCNR), Ser109, 114–116 (EDQ), and Gln120 contribute to the substrate site. Cys50 (nucleophile) is an active-site residue. 189 to 194 (GFGKMS) serves as a coordination point for NADP(+).

It belongs to the glutamyl-tRNA reductase family. In terms of assembly, homodimer.

It catalyses the reaction (S)-4-amino-5-oxopentanoate + tRNA(Glu) + NADP(+) = L-glutamyl-tRNA(Glu) + NADPH + H(+). The protein operates within porphyrin-containing compound metabolism; protoporphyrin-IX biosynthesis; 5-aminolevulinate from L-glutamyl-tRNA(Glu): step 1/2. Functionally, catalyzes the NADPH-dependent reduction of glutamyl-tRNA(Glu) to glutamate 1-semialdehyde (GSA). The chain is Glutamyl-tRNA reductase from Alkaliphilus metalliredigens (strain QYMF).